Here is a 356-residue protein sequence, read N- to C-terminus: Outer membrane protein Omp38 (356 aa).

A signal peptide spans 1–19 (MKLSRIALATMLVAAPLAA). An OmpA-like domain is found at 221–339 (ELTEDLNMEL…RVFATITGSR (119 aa)). Residues asparagine 237, aspartate 271, threonine 273, asparagine 279, and arginine 286 each contribute to the meso-2,6-diaminopimelate site.

This sequence belongs to the outer membrane OOP (TC 1.B.6) superfamily. Homotrimer. Forms a pore with a size of 1.3 nm.

The protein resides in the cell outer membrane. The protein localises to the host mitochondrion. In terms of biological role, functions as a porin. Induces apoptosis in human cell lines through caspase-dependent and AIF-dependent pathways. Purified Omp38 enters host cell and localizes to the mitochondria, which presumably leads to a release of proapoptotic molecules such as cytochrome c and AIF (apoptosis-inducing factor). Binds peptidoglycan, contributes to cell wall maintenance. The polypeptide is Outer membrane protein Omp38 (Acinetobacter baumannii (strain ATCC 19606 / DSM 30007 / JCM 6841 / CCUG 19606 / CIP 70.34 / NBRC 109757 / NCIMB 12457 / NCTC 12156 / 81)).